The chain runs to 83 residues: Protein CASPARIAN STRIP INTEGRITY FACTOR 1 (83 aa).

Positions 1–22 are cleaved as a signal peptide; it reads MGMSPLTVKKLGFIFMIVSASA. The disordered stretch occupies residues 59 to 83; sequence MNTKDYGNNSPSPRLERPPFKLIPN. Position 64 is a sulfotyrosine (tyrosine 64). 2 positions are modified to hydroxyproline: proline 69 and proline 71.

In terms of assembly, interacts with the specific receptor kinases GSO1 and GSO2. In terms of tissue distribution, expressed exclusively in the root stele.

Its function is as follows. Peptide hormone required for contiguous Casparian strip diffusion barrier formation in roots via the regulation of CASPs protein expression and distribution in a GSO1-GSO2 signaling pathway. The Casparian strip is required for ion homeostasis (e.g. iron and potassium ions). The polypeptide is Protein CASPARIAN STRIP INTEGRITY FACTOR 1 (Arabidopsis thaliana (Mouse-ear cress)).